Reading from the N-terminus, the 434-residue chain is Trigger factor (434 aa).

The 86-residue stretch at 161 to 246 (EDRATLDFTG…LKKVEVRELP (86 aa)) folds into the PPIase FKBP-type domain.

It belongs to the FKBP-type PPIase family. Tig subfamily.

It localises to the cytoplasm. It catalyses the reaction [protein]-peptidylproline (omega=180) = [protein]-peptidylproline (omega=0). Involved in protein export. Acts as a chaperone by maintaining the newly synthesized protein in an open conformation. Functions as a peptidyl-prolyl cis-trans isomerase. The protein is Trigger factor of Yersinia pseudotuberculosis serotype O:1b (strain IP 31758).